The primary structure comprises 279 residues: Large ribosomal subunit protein uL2 (279 aa).

Residues 223–279 form a disordered region; that stretch reads VAMNPVDHPMGGGEGRSSGGHPRSRKGLYAKGGKTRSANKYSKNMIVKKRVNKRLSK. Over residues 268–279 the composition is skewed to basic residues; that stretch reads IVKKRVNKRLSK.

The protein belongs to the universal ribosomal protein uL2 family. As to quaternary structure, part of the 50S ribosomal subunit. Forms a bridge to the 30S subunit in the 70S ribosome.

One of the primary rRNA binding proteins. Required for association of the 30S and 50S subunits to form the 70S ribosome, for tRNA binding and peptide bond formation. It has been suggested to have peptidyltransferase activity; this is somewhat controversial. Makes several contacts with the 16S rRNA in the 70S ribosome. This chain is Large ribosomal subunit protein uL2, found in Cytophaga hutchinsonii (strain ATCC 33406 / DSM 1761 / CIP 103989 / NBRC 15051 / NCIMB 9469 / D465).